We begin with the raw amino-acid sequence, 88 residues long: Small ribosomal subunit protein bS20 (88 aa).

The segment at 1-27 (MANSKSAKKRALQSEKRRQHNASRRSM) is disordered.

The protein belongs to the bacterial ribosomal protein bS20 family.

Functionally, binds directly to 16S ribosomal RNA. This Shewanella woodyi (strain ATCC 51908 / MS32) protein is Small ribosomal subunit protein bS20.